The primary structure comprises 212 residues: Translation initiation factor IF-3 (212 aa).

A disordered region spans residues 171–212 (PKSASKKGHTPPKTQVEASKQANESAETEEEKKRCHPTKPVL). Over residues 182-195 (PKTQVEASKQANES) the composition is skewed to polar residues.

The protein belongs to the IF-3 family. In terms of assembly, monomer.

Its subcellular location is the cytoplasm. Functionally, IF-3 binds to the 30S ribosomal subunit and shifts the equilibrium between 70S ribosomes and their 50S and 30S subunits in favor of the free subunits, thus enhancing the availability of 30S subunits on which protein synthesis initiation begins. The sequence is that of Translation initiation factor IF-3 from Porphyromonas gingivalis (strain ATCC 33277 / DSM 20709 / CIP 103683 / JCM 12257 / NCTC 11834 / 2561).